Here is a 308-residue protein sequence, read N- to C-terminus: Lipoyl synthase (308 aa).

[4Fe-4S] cluster is bound by residues cysteine 48, cysteine 53, cysteine 59, cysteine 74, cysteine 78, cysteine 81, and serine 287. Positions 60-277 (WSRHTATYLA…RSVGEALGLF (218 aa)) constitute a Radical SAM core domain.

The protein belongs to the radical SAM superfamily. Lipoyl synthase family. [4Fe-4S] cluster is required as a cofactor.

It localises to the cytoplasm. The catalysed reaction is [[Fe-S] cluster scaffold protein carrying a second [4Fe-4S](2+) cluster] + N(6)-octanoyl-L-lysyl-[protein] + 2 oxidized [2Fe-2S]-[ferredoxin] + 2 S-adenosyl-L-methionine + 4 H(+) = [[Fe-S] cluster scaffold protein] + N(6)-[(R)-dihydrolipoyl]-L-lysyl-[protein] + 4 Fe(3+) + 2 hydrogen sulfide + 2 5'-deoxyadenosine + 2 L-methionine + 2 reduced [2Fe-2S]-[ferredoxin]. It participates in protein modification; protein lipoylation via endogenous pathway; protein N(6)-(lipoyl)lysine from octanoyl-[acyl-carrier-protein]: step 2/2. In terms of biological role, catalyzes the radical-mediated insertion of two sulfur atoms into the C-6 and C-8 positions of the octanoyl moiety bound to the lipoyl domains of lipoate-dependent enzymes, thereby converting the octanoylated domains into lipoylated derivatives. This is Lipoyl synthase from Chlamydia muridarum (strain MoPn / Nigg).